A 134-amino-acid polypeptide reads, in one-letter code: D-ribose pyranase (134 aa).

Histidine 20 functions as the Proton donor in the catalytic mechanism. Substrate-binding positions include aspartate 28, histidine 101, and 123-125; that span reads YSN.

This sequence belongs to the RbsD / FucU family. RbsD subfamily. As to quaternary structure, homodecamer.

It localises to the cytoplasm. It carries out the reaction beta-D-ribopyranose = beta-D-ribofuranose. Its pathway is carbohydrate metabolism; D-ribose degradation; D-ribose 5-phosphate from beta-D-ribopyranose: step 1/2. Catalyzes the interconversion of beta-pyran and beta-furan forms of D-ribose. This is D-ribose pyranase from Pseudomonas syringae pv. syringae (strain B728a).